A 381-amino-acid chain; its full sequence is Cytochrome b (381 aa).

Helical transmembrane passes span 33-53 (FGSL…FLAM), 77-98 (WLLR…FLHV), 113-133 (WNIG…GYVL), and 178-198 (FFAF…VHLL). Residues His83 and His97 each contribute to the heme b site. Residues His182 and His196 each coordinate heme b. His201 is a binding site for a ubiquinone. Helical transmembrane passes span 226-246 (IKDA…ALFS), 288-308 (LGGV…PLLH), 320-340 (VSQT…WIGG), and 347-367 (FIII…VMMP).

It belongs to the cytochrome b family. As to quaternary structure, the cytochrome bc1 complex contains 11 subunits: 3 respiratory subunits (MT-CYB, CYC1 and UQCRFS1), 2 core proteins (UQCRC1 and UQCRC2) and 6 low-molecular weight proteins (UQCRH/QCR6, UQCRB/QCR7, UQCRQ/QCR8, UQCR10/QCR9, UQCR11/QCR10 and a cleavage product of UQCRFS1). This cytochrome bc1 complex then forms a dimer. The cofactor is heme b.

The protein localises to the mitochondrion inner membrane. Component of the ubiquinol-cytochrome c reductase complex (complex III or cytochrome b-c1 complex) that is part of the mitochondrial respiratory chain. The b-c1 complex mediates electron transfer from ubiquinol to cytochrome c. Contributes to the generation of a proton gradient across the mitochondrial membrane that is then used for ATP synthesis. The polypeptide is Cytochrome b (MT-CYB) (Dasyurus hallucatus (Northern quoll)).